The primary structure comprises 89 residues: Cell division topological specificity factor (89 aa).

It belongs to the MinE family.

Its function is as follows. Prevents the cell division inhibition by proteins MinC and MinD at internal division sites while permitting inhibition at polar sites. This ensures cell division at the proper site by restricting the formation of a division septum at the midpoint of the long axis of the cell. The protein is Cell division topological specificity factor of Edwardsiella ictaluri (strain 93-146).